The sequence spans 166 residues: Crossover junction endodeoxyribonuclease RuvC (166 aa).

Residues D7, E67, and D140 contribute to the active site. Mg(2+)-binding residues include D7, E67, and D140.

The protein belongs to the RuvC family. As to quaternary structure, homodimer which binds Holliday junction (HJ) DNA. The HJ becomes 2-fold symmetrical on binding to RuvC with unstacked arms; it has a different conformation from HJ DNA in complex with RuvA. In the full resolvosome a probable DNA-RuvA(4)-RuvB(12)-RuvC(2) complex forms which resolves the HJ. Mg(2+) is required as a cofactor.

The protein resides in the cytoplasm. It carries out the reaction Endonucleolytic cleavage at a junction such as a reciprocal single-stranded crossover between two homologous DNA duplexes (Holliday junction).. Functionally, the RuvA-RuvB-RuvC complex processes Holliday junction (HJ) DNA during genetic recombination and DNA repair. Endonuclease that resolves HJ intermediates. Cleaves cruciform DNA by making single-stranded nicks across the HJ at symmetrical positions within the homologous arms, yielding a 5'-phosphate and a 3'-hydroxyl group; requires a central core of homology in the junction. The consensus cleavage sequence is 5'-(A/T)TT(C/G)-3'. Cleavage occurs on the 3'-side of the TT dinucleotide at the point of strand exchange. HJ branch migration catalyzed by RuvA-RuvB allows RuvC to scan DNA until it finds its consensus sequence, where it cleaves and resolves the cruciform DNA. The protein is Crossover junction endodeoxyribonuclease RuvC of Brevibacillus brevis (strain 47 / JCM 6285 / NBRC 100599).